The chain runs to 253 residues: Sulfate transporter CysZ (253 aa).

4 helical membrane passes run 31-51, 75-95, 151-171, and 222-242; these read FVILPLLVNILLMGGAFWWLF, LLWPLAVISVLLVFGYFFSTI, IVLLIIYFIPGIGQTVAPVLW, and IPLLNLFIMPVAVCGATAMWV.

The protein belongs to the CysZ family.

The protein resides in the cell inner membrane. High affinity, high specificity proton-dependent sulfate transporter, which mediates sulfate uptake. Provides the sulfur source for the cysteine synthesis pathway. The sequence is that of Sulfate transporter CysZ from Escherichia coli O139:H28 (strain E24377A / ETEC).